The primary structure comprises 431 residues: Chaperone SurA (431 aa).

Residues 1 to 20 (MKNWRTLILGLALSASTAFA) form the signal peptide. PpiC domains are found at residues 171–272 (NDEL…KVND) and 282–382 (VTET…QLLD).

The protein localises to the periplasm. It carries out the reaction [protein]-peptidylproline (omega=180) = [protein]-peptidylproline (omega=0). Functionally, chaperone involved in the correct folding and assembly of outer membrane proteins. Recognizes specific patterns of aromatic residues and the orientation of their side chains, which are found more frequently in integral outer membrane proteins. May act in both early periplasmic and late outer membrane-associated steps of protein maturation. In Pectobacterium atrosepticum (strain SCRI 1043 / ATCC BAA-672) (Erwinia carotovora subsp. atroseptica), this protein is Chaperone SurA.